A 312-amino-acid polypeptide reads, in one-letter code: uncharacterized protein (312 aa).

An ATP-binding site is contributed by 112-118 (LIGLPMV).

The protein belongs to the MurCDEF family.

This is an uncharacterized protein from Methanothermobacter thermautotrophicus (strain ATCC 29096 / DSM 1053 / JCM 10044 / NBRC 100330 / Delta H) (Methanobacterium thermoautotrophicum).